The primary structure comprises 413 residues: Serine hydroxymethyltransferase (413 aa).

Residues Leu-119 and 123 to 125 (GHL) each bind (6S)-5,6,7,8-tetrahydrofolate. Lys-228 is modified (N6-(pyridoxal phosphate)lysine).

Belongs to the SHMT family. Homodimer. Pyridoxal 5'-phosphate serves as cofactor.

It is found in the cytoplasm. The enzyme catalyses (6R)-5,10-methylene-5,6,7,8-tetrahydrofolate + glycine + H2O = (6S)-5,6,7,8-tetrahydrofolate + L-serine. Its pathway is one-carbon metabolism; tetrahydrofolate interconversion. The protein operates within amino-acid biosynthesis; glycine biosynthesis; glycine from L-serine: step 1/1. In terms of biological role, catalyzes the reversible interconversion of serine and glycine with tetrahydrofolate (THF) serving as the one-carbon carrier. This reaction serves as the major source of one-carbon groups required for the biosynthesis of purines, thymidylate, methionine, and other important biomolecules. Also exhibits THF-independent aldolase activity toward beta-hydroxyamino acids, producing glycine and aldehydes, via a retro-aldol mechanism. The polypeptide is Serine hydroxymethyltransferase (Caldanaerobacter subterraneus subsp. tengcongensis (strain DSM 15242 / JCM 11007 / NBRC 100824 / MB4) (Thermoanaerobacter tengcongensis)).